Reading from the N-terminus, the 272-residue chain is 3-methyl-2-oxobutanoate hydroxymethyltransferase (272 aa).

D43 and D82 together coordinate Mg(2+). Residues 43-44 (DS), D82, and K112 contribute to the 3-methyl-2-oxobutanoate site. Mg(2+) is bound at residue E114. The active-site Proton acceptor is the E179.

The protein belongs to the PanB family. Homodecamer; pentamer of dimers. Requires Mg(2+) as cofactor.

The protein resides in the cytoplasm. It catalyses the reaction 3-methyl-2-oxobutanoate + (6R)-5,10-methylene-5,6,7,8-tetrahydrofolate + H2O = 2-dehydropantoate + (6S)-5,6,7,8-tetrahydrofolate. The protein operates within cofactor biosynthesis; (R)-pantothenate biosynthesis; (R)-pantoate from 3-methyl-2-oxobutanoate: step 1/2. Functionally, catalyzes the reversible reaction in which hydroxymethyl group from 5,10-methylenetetrahydrofolate is transferred onto alpha-ketoisovalerate to form ketopantoate. In Staphylococcus aureus (strain Newman), this protein is 3-methyl-2-oxobutanoate hydroxymethyltransferase.